Here is a 498-residue protein sequence, read N- to C-terminus: PHD finger protein 10 (498 aa).

The segment covering 1-10 has biased composition (low complexity); that stretch reads MAAAAGPGAA. Positions 1 to 62 are disordered; it reads MAAAAGPGAA…SSRSCETSSQ (62 aa). Position 2 is an N-acetylalanine (Ala-2). Phosphoserine is present on residues Ser-12, Ser-36, and Ser-50. An essential to induce neural progenitor proliferation region spans residues 89–185; sequence MLQEQVSEYL…HYKEYSQMQQ (97 aa). Residues 89–295 form an SAY region; it reads MLQEQVSEYL…PPLDPELPAL (207 aa). A Glycyl lysine isopeptide (Lys-Gly) (interchain with G-Cter in SUMO2) cross-link involves residue Lys-241. Ser-270 is modified (phosphoserine). Over residues 285-296 the composition is skewed to low complexity; it reads EPPLDPELPALD. The disordered stretch occupies residues 285 to 368; the sequence is EPPLDPELPA…KRSVLSKSVP (84 aa). The tract at residues 292-334 is essential to induce neural progenitor proliferation; it reads LPALDSDGDSDDGEDGRGDEKRKNKGTSDSSSGNVSEGESPPD. Ser-297, Ser-301, Ser-327, and Ser-331 each carry phosphoserine. Polar residues predominate over residues 318–328; it reads TSDSSSGNVSE. Over residues 345–359 the composition is skewed to basic and acidic residues; sequence KSKDKAATPRKDGPK. The PHD-type 1; degenerate zinc finger occupies 379-436; the sequence is ICGICLKGKESNKKGKAESLIHCSQCENSGHPSCLDMTMELVSMIKTYPWQCMECKTC. Lys-385 participates in a covalent cross-link: Glycyl lysine isopeptide (Lys-Gly) (interchain with G-Cter in SUMO2). Residues 438 to 481 form a PHD-type 2; degenerate zinc finger; the sequence is ICGQPHHEEEMMFCDMCDRGYHTFCVGLGAIPSGRWICDCCQRA.

It belongs to the SAYP family. In terms of assembly, component of neural progenitors-specific chromatin remodeling complex (npBAF complex) composed of at least, ARID1A/BAF250A or ARID1B/BAF250B, SMARCD1/BAF60A, SMARCD3/BAF60C, SMARCA2/BRM/BAF190B, SMARCA4/BRG1/BAF190A, SMARCB1/BAF47, SMARCC1/BAF155, SMARCE1/BAF57, SMARCC2/BAF170, PHF10/BAF45A, ACTL6A/BAF53A and actin. Interacts with ACTL6A/BAF53A, SMARCA2/BRM/BAF190B, SMARCA4/BRG1/BAF190A and PBRM1/BAF180.

It is found in the nucleus. Its function is as follows. Involved in transcription activity regulation by chromatin remodeling. Belongs to the neural progenitors-specific chromatin remodeling complex (npBAF complex) and is required for the proliferation of neural progenitors. During neural development a switch from a stem/progenitor to a post-mitotic chromatin remodeling mechanism occurs as neurons exit the cell cycle and become committed to their adult state. The transition from proliferating neural stem/progenitor cells to post-mitotic neurons requires a switch in subunit composition of the npBAF and nBAF complexes. As neural progenitors exit mitosis and differentiate into neurons, npBAF complexes which contain ACTL6A/BAF53A and PHF10/BAF45A, are exchanged for homologous alternative ACTL6B/BAF53B and DPF1/BAF45B or DPF3/BAF45C subunits in neuron-specific complexes (nBAF). The npBAF complex is essential for the self-renewal/proliferative capacity of the multipotent neural stem cells. The nBAF complex along with CREST plays a role regulating the activity of genes essential for dendrite growth. The sequence is that of PHD finger protein 10 (PHF10) from Homo sapiens (Human).